We begin with the raw amino-acid sequence, 314 residues long: Methionyl-tRNA formyltransferase (314 aa).

Residue 113–116 participates in (6S)-5,6,7,8-tetrahydrofolate binding; sequence SLLP.

The protein belongs to the Fmt family.

The enzyme catalyses L-methionyl-tRNA(fMet) + (6R)-10-formyltetrahydrofolate = N-formyl-L-methionyl-tRNA(fMet) + (6S)-5,6,7,8-tetrahydrofolate + H(+). In terms of biological role, attaches a formyl group to the free amino group of methionyl-tRNA(fMet). The formyl group appears to play a dual role in the initiator identity of N-formylmethionyl-tRNA by promoting its recognition by IF2 and preventing the misappropriation of this tRNA by the elongation apparatus. The polypeptide is Methionyl-tRNA formyltransferase (Pseudomonas syringae pv. syringae (strain B728a)).